Reading from the N-terminus, the 205-residue chain is MQAPPSFYEGDTLEVAKKLLGQKLVHIVNGIKRSGIIVEVEAYKGPDDKAAHSYGGRRTDRTEVMFGAPGHAYVYLIYGMYHCFNVITAPVGTPQGVLIRALEPVDGIEEIKLARYNKTDITKAQYKNLTNGPGKLCRALGITLEERGVSLQSDTLHIELVPEEKHISSQYKITAGPRINIDYAEEAVHYPWRFYYEGHPFVSKK.

Belongs to the DNA glycosylase MPG family.

This is Putative 3-methyladenine DNA glycosylase from Bacillus anthracis (strain A0248).